A 234-amino-acid chain; its full sequence is uncharacterized protein (234 aa).

In terms of domain architecture, tRNA-binding spans 103–211 (LAKKVPFVVC…SHIKIGKSFL (109 aa)).

This is an uncharacterized protein from Mycoplasma pneumoniae (strain ATCC 29342 / M129 / Subtype 1) (Mycoplasmoides pneumoniae).